Consider the following 172-residue polypeptide: RNA pyrophosphohydrolase (172 aa).

Residues Gly6 to Lys149 form the Nudix hydrolase domain. Residues Gly38–Gly59 carry the Nudix box motif.

The protein belongs to the Nudix hydrolase family. RppH subfamily. A divalent metal cation serves as cofactor.

Accelerates the degradation of transcripts by removing pyrophosphate from the 5'-end of triphosphorylated RNA, leading to a more labile monophosphorylated state that can stimulate subsequent ribonuclease cleavage. The chain is RNA pyrophosphohydrolase from Shewanella frigidimarina (strain NCIMB 400).